Reading from the N-terminus, the 391-residue chain is 1-deoxy-D-xylulose 5-phosphate reductoisomerase (391 aa).

5 residues coordinate NADPH: T11, G12, S13, I14, and N126. K127 provides a ligand contact to 1-deoxy-D-xylulose 5-phosphate. E128 contacts NADPH. D152 is a Mn(2+) binding site. 1-deoxy-D-xylulose 5-phosphate-binding residues include S153, E154, S176, and H199. E154 is a binding site for Mn(2+). G205 is a binding site for NADPH. 1-deoxy-D-xylulose 5-phosphate contacts are provided by S212, N217, K218, and E221. E221 contacts Mn(2+).

Belongs to the DXR family. Requires Mg(2+) as cofactor. The cofactor is Mn(2+).

The enzyme catalyses 2-C-methyl-D-erythritol 4-phosphate + NADP(+) = 1-deoxy-D-xylulose 5-phosphate + NADPH + H(+). Its pathway is isoprenoid biosynthesis; isopentenyl diphosphate biosynthesis via DXP pathway; isopentenyl diphosphate from 1-deoxy-D-xylulose 5-phosphate: step 1/6. Catalyzes the NADPH-dependent rearrangement and reduction of 1-deoxy-D-xylulose-5-phosphate (DXP) to 2-C-methyl-D-erythritol 4-phosphate (MEP). This is 1-deoxy-D-xylulose 5-phosphate reductoisomerase from Acidithiobacillus ferrooxidans (strain ATCC 53993 / BNL-5-31) (Leptospirillum ferrooxidans (ATCC 53993)).